The sequence spans 272 residues: Tryptophan synthase alpha chain (272 aa).

Residues E49 and D60 each act as proton acceptor in the active site.

This sequence belongs to the TrpA family. Tetramer of two alpha and two beta chains.

The catalysed reaction is (1S,2R)-1-C-(indol-3-yl)glycerol 3-phosphate + L-serine = D-glyceraldehyde 3-phosphate + L-tryptophan + H2O. Its pathway is amino-acid biosynthesis; L-tryptophan biosynthesis; L-tryptophan from chorismate: step 5/5. Its function is as follows. The alpha subunit is responsible for the aldol cleavage of indoleglycerol phosphate to indole and glyceraldehyde 3-phosphate. This chain is Tryptophan synthase alpha chain, found in Acidithiobacillus ferrooxidans (strain ATCC 23270 / DSM 14882 / CIP 104768 / NCIMB 8455) (Ferrobacillus ferrooxidans (strain ATCC 23270)).